The primary structure comprises 283 residues: Bifunctional protein FolD (283 aa).

NADP(+)-binding positions include 164 to 166 (GRS), Ser-189, and Thr-230.

The protein belongs to the tetrahydrofolate dehydrogenase/cyclohydrolase family. In terms of assembly, homodimer.

It carries out the reaction (6R)-5,10-methylene-5,6,7,8-tetrahydrofolate + NADP(+) = (6R)-5,10-methenyltetrahydrofolate + NADPH. The enzyme catalyses (6R)-5,10-methenyltetrahydrofolate + H2O = (6R)-10-formyltetrahydrofolate + H(+). It participates in one-carbon metabolism; tetrahydrofolate interconversion. Functionally, catalyzes the oxidation of 5,10-methylenetetrahydrofolate to 5,10-methenyltetrahydrofolate and then the hydrolysis of 5,10-methenyltetrahydrofolate to 10-formyltetrahydrofolate. The chain is Bifunctional protein FolD from Dictyoglomus thermophilum (strain ATCC 35947 / DSM 3960 / H-6-12).